Consider the following 361-residue polypeptide: Chorismate synthase (361 aa).

NADP(+) contacts are provided by Arg-48 and Arg-54. FMN contacts are provided by residues Arg-125 to Ser-127, Asn-238 to Ala-239, Gly-278, Lys-293 to Ser-297, and Arg-319.

It belongs to the chorismate synthase family. Homotetramer. It depends on FMNH2 as a cofactor.

It carries out the reaction 5-O-(1-carboxyvinyl)-3-phosphoshikimate = chorismate + phosphate. It participates in metabolic intermediate biosynthesis; chorismate biosynthesis; chorismate from D-erythrose 4-phosphate and phosphoenolpyruvate: step 7/7. In terms of biological role, catalyzes the anti-1,4-elimination of the C-3 phosphate and the C-6 proR hydrogen from 5-enolpyruvylshikimate-3-phosphate (EPSP) to yield chorismate, which is the branch point compound that serves as the starting substrate for the three terminal pathways of aromatic amino acid biosynthesis. This reaction introduces a second double bond into the aromatic ring system. This Escherichia coli (strain K12 / MC4100 / BW2952) protein is Chorismate synthase.